A 188-amino-acid polypeptide reads, in one-letter code: CASP-like protein 4B1 (188 aa).

Residues 1–11 are compositionally biased toward basic and acidic residues; that stretch reads MTNPDKQKPVE. Positions 1 to 34 are disordered; it reads MTNPDKQKPVEVTDVETAAEKTSEPTPASGTSTI. Residues 1–46 are Cytoplasmic-facing; that stretch reads MTNPDKQKPVEVTDVETAAEKTSEPTPASGTSTITQRWKREDLIKK. Residues 24-34 are compositionally biased toward polar residues; the sequence is EPTPASGTSTI. The chain crosses the membrane as a helical span at residues 47–67; that stretch reads ASPITRGICLLFSLLAFLIMV. Over 68 to 84 the chain is Extracellular; that stretch reads SNKHGYGRNFNEYEEYR. Residues 85 to 105 traverse the membrane as a helical segment; the sequence is YVLAISIISTLYTAWQTFAHF. Topologically, residues 106–120 are cytoplasmic; sequence SKREFFDRRTSTLVD. The helical transmembrane segment at 121–141 threads the bilayer; sequence FSGDQIVAYLLISAASSAIPL. Residues 142-156 are Extracellular-facing; it reads TNRFREGQDNIFTDS. The chain crosses the membrane as a helical span at residues 157-177; that stretch reads AASAISMAIFAFVALALSALF. The Cytoplasmic segment spans residues 178–188; that stretch reads SGYKLSTHSFI.

Belongs to the Casparian strip membrane proteins (CASP) family. Homodimer and heterodimers.

It localises to the cell membrane. This is CASP-like protein 4B1 from Arabidopsis lyrata subsp. lyrata (Lyre-leaved rock-cress).